The following is a 482-amino-acid chain: tRNA modification GTPase MnmE (482 aa).

Residues Arg25, Glu82, and Lys135 each contribute to the (6S)-5-formyl-5,6,7,8-tetrahydrofolate site. The TrmE-type G domain maps to 231-404 (GIKVVIAGQP…LRRVLLDIAG (174 aa)). Position 241 (Asn241) interacts with K(+). GTP-binding positions include 241-246 (NAGKSS), 260-266 (TPIAGTT), 285-288 (DTAG), and 385-387 (SAR). Position 245 (Ser245) interacts with Mg(2+). Thr260, Ile262, and Thr265 together coordinate K(+). Thr266 is a binding site for Mg(2+). Lys482 provides a ligand contact to (6S)-5-formyl-5,6,7,8-tetrahydrofolate.

This sequence belongs to the TRAFAC class TrmE-Era-EngA-EngB-Septin-like GTPase superfamily. TrmE GTPase family. In terms of assembly, homodimer. Heterotetramer of two MnmE and two MnmG subunits. The cofactor is K(+).

The protein resides in the cytoplasm. In terms of biological role, exhibits a very high intrinsic GTPase hydrolysis rate. Involved in the addition of a carboxymethylaminomethyl (cmnm) group at the wobble position (U34) of certain tRNAs, forming tRNA-cmnm(5)s(2)U34. The protein is tRNA modification GTPase MnmE of Paracidovorax citrulli (strain AAC00-1) (Acidovorax citrulli).